We begin with the raw amino-acid sequence, 337 residues long: Glycerol-3-phosphate dehydrogenase [NAD(P)+] 2 (337 aa).

T11, W12, and K105 together coordinate NADPH. Residues K105, G139, and T141 each coordinate sn-glycerol 3-phosphate. An NADPH-binding site is contributed by A143. Sn-glycerol 3-phosphate contacts are provided by K194, D247, S257, R258, and N259. The Proton acceptor role is filled by K194. An NADPH-binding site is contributed by R258. The NADPH site is built by V282 and E284.

Belongs to the NAD-dependent glycerol-3-phosphate dehydrogenase family.

The protein resides in the cytoplasm. It carries out the reaction sn-glycerol 3-phosphate + NAD(+) = dihydroxyacetone phosphate + NADH + H(+). It catalyses the reaction sn-glycerol 3-phosphate + NADP(+) = dihydroxyacetone phosphate + NADPH + H(+). The protein operates within membrane lipid metabolism; glycerophospholipid metabolism. Its function is as follows. Catalyzes the reduction of the glycolytic intermediate dihydroxyacetone phosphate (DHAP) to sn-glycerol 3-phosphate (G3P), the key precursor for phospholipid synthesis. In Lactobacillus delbrueckii subsp. bulgaricus (strain ATCC 11842 / DSM 20081 / BCRC 10696 / JCM 1002 / NBRC 13953 / NCIMB 11778 / NCTC 12712 / WDCM 00102 / Lb 14), this protein is Glycerol-3-phosphate dehydrogenase [NAD(P)+] 2.